The primary structure comprises 1197 residues: SRC kinase signaling inhibitor 1 (1197 aa).

A compositionally biased stretch (basic and acidic residues) spans 19 to 45 (AEGRARSPREEVGPRDPGGRGEPDPER). Residues 19–80 (AEGRARSPRE…GGSGGRRFSN (62 aa)) are disordered. A phosphoserine mark is found at serine 47 and serine 52. Residues 65 to 75 (LGGGGSGGSGG) show a composition bias toward gly residues. Phosphoserine is present on serine 79. Phosphothreonine is present on threonine 86. Phosphoserine occurs at positions 87, 98, 178, 200, 204, 214, and 260. Residue tyrosine 276 is modified to Phosphotyrosine. The segment at 319–415 (ASRESSPTRR…RRDVKPDEDL (97 aa)) is disordered. Polar residues predominate over residues 321–331 (RESSPTRRLNN). Residues 332–341 (LSPASHLASS) show a composition bias toward low complexity. A phosphoserine mark is found at serine 333, serine 342, and serine 359. A compositionally biased stretch (low complexity) spans 348 to 366 (PSGLPSGLPSGSPSRSRLS). Arginine 364 and arginine 371 each carry omega-N-methylarginine. Phosphoserine occurs at positions 378, 397, and 399. Residues 391–400 (PTSQGVSPSP) are compositionally biased toward polar residues. Positions 404 to 415 (LERRDVKPDEDL) are enriched in basic and acidic residues. Tyrosine 431 carries the phosphotyrosine modification. Positions 501 to 676 (GFRLPPSSPQ…AVSSTPAGQP (176 aa)) are disordered. Pro residues predominate over residues 520 to 531 (GGPPPPHSPYSG). Phosphoserine is present on residues serine 527, serine 530, and serine 534. An Omega-N-methylarginine modification is found at arginine 535. Phosphoserine occurs at positions 537, 547, 549, 551, and 556. Positions 595 to 607 (KDTETRERMEAME) are enriched in basic and acidic residues. A phosphoserine mark is found at serine 631 and serine 655. 2 positions are modified to phosphothreonine: threonine 658 and threonine 671. Positions 681-731 (RLQMQMHLRGLQNSASDLRGQLQQLRKLQLQNQESVRALLKRTEAELSMRV) are interaction with SNAP25. Coiled-coil stretches lie at residues 688–708 (LRGL…LRKL) and 760–780 (EELI…IQRD). Serine 878 and serine 900 each carry phosphoserine. Disordered stretches follow at residues 891 to 949 (GLDF…ERDW) and 983 to 1065 (DCAS…VVTS). Threonine 918 is modified (phosphothreonine). Position 1021 is a phosphoserine (serine 1021). Positions 1036–1045 (KSPPPPPPRR) are enriched in pro residues. A phosphoserine mark is found at serine 1077 and serine 1094. The disordered stretch occupies residues 1141-1163 (SRLKAAQGPAGSPDKGKHGKQRT).

This sequence belongs to the SRCIN1 family. Interacts with BCAR1/p130Cas through its C-terminal domain and with CSK, CTTN and SRC. Also interacts with MAPRE3/EB3, SORBS3/vinexin and the N-terminal coiled-coil region of SNAP25. In terms of processing, tyrosine-phosphorylated in response to EGF and to cell adhesion to integrin ligands. In terms of tissue distribution, expressed exclusively in brain. Abundant in telencephalon and expressed moderately in cerebellum, hypothalamus, thalamus, superior and inferior colliculi, and olfactory bulb. No expression detected in medulla oblongata, spinal cord or pituitary gland. Enriched in the neuropil rather than soma in the thalamus, corpus striatum and cerebral cortex. Detected in astrocytes.

The protein resides in the cytoplasm. Its subcellular location is the cytoskeleton. It localises to the cell projection. The protein localises to the axon. It is found in the dendrite. The protein resides in the presynapse. Its subcellular location is the postsynapse. It localises to the postsynaptic density. Functionally, acts as a negative regulator of SRC by activating CSK which inhibits SRC activity and downstream signaling, leading to impaired cell spreading and migration. Regulates dendritic spine morphology. Involved in calcium-dependent exocytosis. May play a role in neurotransmitter release or synapse maintenance. This is SRC kinase signaling inhibitor 1 from Rattus norvegicus (Rat).